We begin with the raw amino-acid sequence, 567 residues long: MLAKNRLPGSGHTTPSPPASPRRSPRYRHGRSKAAAGSRFPTVQPSRTLAHRLSWILLSVLLRRQGIFLFAPLIYISCMLLYMGTVSFDVVPIIQRRPPPGSVYKSPQVYAKLRPEMDADNSTADAITTIWKHSYKGGEWKPYVNKSTGDLPESNGYIYVEANGGLNQQRTSICNAVAVAGYLNATLVIPNFHYHSIWRDPSKFGDIYDEEFFVSTLSNDVRVVDTIPEYLMERFDHNMTNVYNFRVKAWSPIQYYRDSILPKLLEEKIIRISPFANRLSFDAPQAVQRLRCLANYEALKFSKTILTLGETLVKRMKEQSANHGAKYVSVHLRFEEDMVAFSCCIFDGGNQEKQDMIAARERGWKGKFTKPGRVIRPGAIRQNGKCPLTPLEVGLMLRGMGFNKSTYIFLASGEIYDANRTMAPLLEMFPNLQTKEMLASEEELAPYKNFSSRMAAIDYTVCLHSEVFVTTQGGNFPHFLMGHRRYMFGGHSKTIRPDKRKLAILFDNPNIGWRSFKRQMLNMRSHSDSKGFELKRPNDSIYTFPCPDCMSRRNKTTTPESRPPPAT.

The tract at residues methionine 1–proline 41 is disordered. The Cytoplasmic segment spans residues methionine 1–glutamine 65. Residues arginine 23–serine 32 are compositionally biased toward basic residues. A helical; Signal-anchor for type II membrane protein transmembrane segment spans residues glycine 66 to valine 86. Topologically, residues serine 87–threonine 567 are lumenal. Residues asparagine 121, asparagine 145, asparagine 184, and asparagine 238 are each glycosylated (N-linked (GlcNAc...) asparagine). Histidine 331–arginine 333 lines the substrate pocket. N-linked (GlcNAc...) asparagine glycans are attached at residues asparagine 403, asparagine 419, asparagine 449, asparagine 538, and asparagine 554.

The protein belongs to the glycosyltransferase GT106 family. Ubiquitous.

It localises to the golgi apparatus membrane. The protein operates within protein modification; protein glycosylation. Its function is as follows. Glycosyltransferase that plays a role in cell adhesion. The protein is Protein ESMERALDA 1 of Arabidopsis thaliana (Mouse-ear cress).